Reading from the N-terminus, the 1091-residue chain is LRR receptor-like serine/threonine-protein kinase RGI3 (1091 aa).

A signal peptide spans 1 to 24 (MPPNIYRLSFFSSLLCFFFIPCFS). Topologically, residues 25–703 (LDQQGQALLS…TTRNSSVVRL (679 aa)) are extracellular. The LRR 1 repeat unit spans residues 33-56 (LSWKSQLNISGDAFSSWHVADTSP). A glycan (N-linked (GlcNAc...) asparagine) is linked at Asn-40. Cys-57 and Cys-64 are joined by a disulfide. 26 LRR repeats span residues 67–91 (RGEV…SLRS), 92–115 (LKSL…EIGD), 116–140 (FTEL…IFRL), 142–166 (KLKT…NLSG), 168–188 (VELM…IGEL), 190–213 (NLQV…IGNC), 214–237 (ENLV…IGNL), 239–261 (RVQT…IGYC), 262–285 (TELQ…IGGL), 287–309 (KLQS…LGNC), 311–332 (ELWL…SFGK), 333–357 (LENL…LTNC), 359–383 (KLTH…NLRS), 385–405 (TMFF…LSQC), 406–429 (RELQ…IFGL), 431–453 (NLTK…IGNC), 454–477 (TNLY…IGNL), 478–501 (KNLN…ISGC), 503–524 (SLEF…TTLP), 525–548 (KSLK…IGLL), 549–572 (TELT…ISTC), 574–596 (SLQL…LGQI), 598–620 (SLAI…RFSD), 621–644 (LKNL…LTDL), 645–668 (QNLV…PFFR), and 669–690 (RLPL…ISTR). The N-linked (GlcNAc...) asparagine glycan is linked to Asn-104. Asn-163 is a glycosylation site (N-linked (GlcNAc...) asparagine). Short sequence motifs (small peptide recognition) lie at residues 173–174 (FD), 195–198 (RAGG), 218–223 (MLGLAE), Tyr-246, and 268–270 (YLY). Short sequence motifs (small peptide recognition) lie at residues 316–319 (DFSE) and 338–340 (ELQ). The N-linked (GlcNAc...) asparagine glycan is linked to Asn-356. 2 consecutive short sequence motifs (small peptide recognition) follow at residues 386 to 390 (MFFAW) and 412 to 415 (DLSY). A glycan (N-linked (GlcNAc...) asparagine) is linked at Asn-431. Residues 434–438 (KLLLL) carry the Small peptide recognition motif. An N-linked (GlcNAc...) asparagine glycan is attached at Asn-452. Residues 458-460 (RLR) carry the Small peptide recognition motif. Asn-604 carries N-linked (GlcNAc...) asparagine glycosylation. The N-linked (GlcNAc...) asparagine glycan is linked to Asn-651. N-linked (GlcNAc...) asparagine glycosylation occurs at Asn-697. Residues 704-724 (TILILVVVTAVLVLMAVYTLV) traverse the membrane as a helical segment. At 725-1091 (RARAAGKQLL…CSFAFSDDSV (367 aa)) the chain is on the cytoplasmic side. The Protein kinase domain occupies 760–1046 (LTSANVIGTG…MLTEIRHIDV (287 aa)). Residues 766–774 (IGTGSSGVV) and Lys-788 contribute to the ATP site. Phosphotyrosine is present on residues Tyr-831 and Tyr-870. Asp-883 (proton acceptor) is an active-site residue. The residue at position 933 (Tyr-933) is a Phosphotyrosine.

Belongs to the protein kinase superfamily. Ser/Thr protein kinase family. As to quaternary structure, binds to RGF peptides such as RGF1, GLV5/CLEL1/RGF2, GLV7/CLEL3/RGF3, GLV3/RGF4, GLV10/CLEL7/RGF5 and RGF10/CLELN; these interactions trigger the formation of heterodimers with SERK1, SERK2 or BAK1/SERK3 via LRR regions. Phosphorylated and ubiquitinated upon interaction with RGF1, thus leading to activation a subsequent degradation. In terms of processing, autophosphorylated. In terms of tissue distribution, expressed in roots.

The protein localises to the cell membrane. It catalyses the reaction L-seryl-[protein] + ATP = O-phospho-L-seryl-[protein] + ADP + H(+). It carries out the reaction L-threonyl-[protein] + ATP = O-phospho-L-threonyl-[protein] + ADP + H(+). Together with RGI1, RGI2, RGI4 and RGI5, acts as a receptor of RGF peptides (e.g. RGF1, GLV5/CLEL1/RGF2, GLV7/CLEL3/RGF3, GLV3/RGF4, GLV10/CLEL7/RGF5 and RGF10/CLELN), peptide hormones which maintain the postembryonic root stem cell niche by regulating the expression levels and patterns of the transcription factor PLETHORA (PLT, e.g. PLT1 and PLT2). Links RGF peptides signal with their downstream components. The protein is LRR receptor-like serine/threonine-protein kinase RGI3 of Arabidopsis thaliana (Mouse-ear cress).